The chain runs to 459 residues: Phosphoglucosamine mutase (459 aa).

The active-site Phosphoserine intermediate is Ser-102. The Mg(2+) site is built by Ser-102, Asp-243, Asp-245, and Asp-247. The residue at position 102 (Ser-102) is a Phosphoserine.

The protein belongs to the phosphohexose mutase family. Mg(2+) serves as cofactor. In terms of processing, activated by phosphorylation.

It catalyses the reaction alpha-D-glucosamine 1-phosphate = D-glucosamine 6-phosphate. Its function is as follows. Catalyzes the conversion of glucosamine-6-phosphate to glucosamine-1-phosphate. In Bartonella henselae (strain ATCC 49882 / DSM 28221 / CCUG 30454 / Houston 1) (Rochalimaea henselae), this protein is Phosphoglucosamine mutase.